Consider the following 539-residue polypeptide: Probable K(+)/H(+) antiporter subunit D (539 aa).

The next 14 helical transmembrane spans lie at 4–23 (WLDHLLILPILLPLAVAAVL), 36–58 (AIGFASTLVVFILSMILMRLAAA), 78–100 (FGIVLVLDRLSALMLCLTSGLAL), 113–135 (AGHHFHSLFQLLVAGLNGAFLTG), 140–162 (LFVFFEMMLAASYGLLLHGSGPL), 175–197 (LAASALFLIGVSLIYGAAGTLNM), 217–239 (MGSAILGVAFLVKAGMWPLSFWL), 251–273 (AGVFAVLTKVGIYVIIRLHLLVF), 283–305 (FGQEWLVTGGMLTIAFGGIGVLA), 312–331 (LAGYSVLVSSGTLLAAVGLG), 335–357 (MLAGALFYLVSSTLTIGAFFLLI), 400–422 (VLGLCFCLCALLLAGLPPLSGFI), 442–464 (AMSAADWTYVTLLILSGLAAMIA), and 484–506 (VVVIEITPVVVLLGACIFLSLQA).

It belongs to the CPA3 antiporters (TC 2.A.63) subunit D family. May form a hetero-oligomeric complex that consists of six subunits: PhaAB, PhaC, PhaD, PhaE, PhaF and PhaG.

It localises to the cell membrane. In terms of biological role, part of a K(+) efflux system which is required for the adaptation of R.meliloti to alkaline pH as well as for the infection process during symbiotic nodule development. The polypeptide is Probable K(+)/H(+) antiporter subunit D (phaD) (Rhizobium meliloti (strain 1021) (Ensifer meliloti)).